A 374-amino-acid chain; its full sequence is Diels-Alderase fsa2 (374 aa).

The interval 1–216 is beta-sandwich motif; sequence MSNVTVSAFT…MDRVWSPLSW (216 aa). Positions 216 to 374 are beta-barrel motif; the sequence is WPQVMTESYY…VGTGGQCELS (159 aa).

The protein belongs to the Diels-Alderase family.

It carries out the reaction (5S)-3-[(2E,6R,8E,10E,12E)-2,6-dimethyltetradeca-2,8,10,12-tetraenoyl]-5-(hydroxymethyl)pyrrolidine-2,4-dione = trichosetin. The protein operates within mycotoxin biosynthesis. Its function is as follows. Diels-Alderase; part of the gene cluster that mediates the biosynthesis of the HIV-1 integrase inhibitor equisetin and of fusarisetin A, both trans-fused decalin-containing tetramic acids showing also antimicrobial activity. The PKS module of fsa1 together with the enoylreductase fsa3 catalyze the formation of the polyketide unit which is then conjugated to L-serine by the condensation domain of the fsa1 NRPS module. Activity of the Dieckmann cyclase domain (RED) results in release of the Dieckmann product intermediate. Diels-Alderase fsa2 is involved in endo-selective Diels-Alder cycloaddition to form the decalin ring, leading to the production of N-desmethylequisetin also called trichosetin. Subsequent N-methylation is carried out by fsa4 to give equisetin. The enzymatic gene responsible for the conversion of equisetin to fusarisetin A has not been identified yet and is probably located outside of the fsa cluster. This chain is Diels-Alderase fsa2, found in Fusarium sp. (strain FN080326).